We begin with the raw amino-acid sequence, 282 residues long: Pantothenate synthetase (282 aa).

30–37 (MGALHAGH) is an ATP binding site. Catalysis depends on His37, which acts as the Proton donor. Gln61 contributes to the (R)-pantoate binding site. A beta-alanine-binding site is contributed by Gln61. 147 to 150 (GEKD) contributes to the ATP binding site. Gln153 is a (R)-pantoate binding site. Residues Val177 and 185–188 (LSSR) contribute to the ATP site.

It belongs to the pantothenate synthetase family. In terms of assembly, homodimer.

It localises to the cytoplasm. It carries out the reaction (R)-pantoate + beta-alanine + ATP = (R)-pantothenate + AMP + diphosphate + H(+). Its pathway is cofactor biosynthesis; (R)-pantothenate biosynthesis; (R)-pantothenate from (R)-pantoate and beta-alanine: step 1/1. Functionally, catalyzes the condensation of pantoate with beta-alanine in an ATP-dependent reaction via a pantoyl-adenylate intermediate. This Phocaeicola vulgatus (strain ATCC 8482 / DSM 1447 / JCM 5826 / CCUG 4940 / NBRC 14291 / NCTC 11154) (Bacteroides vulgatus) protein is Pantothenate synthetase.